Reading from the N-terminus, the 36-residue chain is Mu/omega-theraphotoxin-Pmu1a (36 aa).

Cystine bridges form between cysteine 2-cysteine 16, cysteine 9-cysteine 21, and cysteine 15-cysteine 29.

Belongs to the neurotoxin 10 (Hwtx-1) family. Expressed by the venom gland.

It is found in the secreted. Functionally, gating-modifier toxin that targets both voltage-gated sodium and calcium channels, with described activities on human Nav1.7/SCN9A (IC(50)=5.5-7 nM), hNav1.6/SCN10A (IC(50)=9.9 nM), hNav1.4/SCN4A (IC(50)=62.9 nM), hCav3.2/CACNA1H (IC(50)=955.4 nM or 63.5% inhibition at 10 uM), hCav3.1/CACNA1G (95.1% inhibition at 10 uM), hCav3.3/CACNA1I (90.8% inhibition at 10 uM). Acts on Cav3 currents mainly by inducing a strong depolarizing shift in the current-voltage curve. The polypeptide is Mu/omega-theraphotoxin-Pmu1a (Pterinochilus murinus (Mombasa golden starburst baboon spider)).